The sequence spans 671 residues: DNA ligase (671 aa).

Residues 32-36 (DAEYD), 81-82 (SL), and E113 each bind NAD(+). K115 functions as the N6-AMP-lysine intermediate in the catalytic mechanism. The NAD(+) site is built by R136, E173, K290, and K314. 4 residues coordinate Zn(2+): C408, C411, C426, and C432. The BRCT domain maps to 593–671 (EIDSPFAGKT…EAEMIRLLGA (79 aa)).

Belongs to the NAD-dependent DNA ligase family. LigA subfamily. It depends on Mg(2+) as a cofactor. The cofactor is Mn(2+).

It carries out the reaction NAD(+) + (deoxyribonucleotide)n-3'-hydroxyl + 5'-phospho-(deoxyribonucleotide)m = (deoxyribonucleotide)n+m + AMP + beta-nicotinamide D-nucleotide.. In terms of biological role, DNA ligase that catalyzes the formation of phosphodiester linkages between 5'-phosphoryl and 3'-hydroxyl groups in double-stranded DNA using NAD as a coenzyme and as the energy source for the reaction. It is essential for DNA replication and repair of damaged DNA. In Salmonella newport (strain SL254), this protein is DNA ligase.